The following is a 511-amino-acid chain: 2-isopropylmalate synthase (511 aa).

The Pyruvate carboxyltransferase domain maps to Leu5–Leu267. Mn(2+)-binding residues include Asp14, His202, His204, and Asn238. The interval Lys392 to Ile511 is regulatory domain.

Belongs to the alpha-IPM synthase/homocitrate synthase family. LeuA type 1 subfamily. In terms of assembly, homodimer. The cofactor is Mn(2+).

The protein resides in the cytoplasm. It carries out the reaction 3-methyl-2-oxobutanoate + acetyl-CoA + H2O = (2S)-2-isopropylmalate + CoA + H(+). The protein operates within amino-acid biosynthesis; L-leucine biosynthesis; L-leucine from 3-methyl-2-oxobutanoate: step 1/4. In terms of biological role, catalyzes the condensation of the acetyl group of acetyl-CoA with 3-methyl-2-oxobutanoate (2-ketoisovalerate) to form 3-carboxy-3-hydroxy-4-methylpentanoate (2-isopropylmalate). In Ruthia magnifica subsp. Calyptogena magnifica, this protein is 2-isopropylmalate synthase.